The primary structure comprises 294 residues: Undecaprenyl-diphosphatase (294 aa).

A run of 9 helical transmembrane segments spans residues 2-22 (SMIYITLNIIAYVIDVRSLIL), 27-47 (LVFSLILGIVEGLTEFLPISS), 65-85 (VIAFTVIIQLGAILSITKIFW), 110-130 (LCIRHIFLGTFPGIMLGMIFY), 135-155 (LIFELTYIMYGLIIGGIFLLV), 172-192 (ITYLQAFLIGCFQCLAFWPGF), 215-235 (FSFFLAVPIIFGSAVLTLYHY), 239-259 (IGLMDVLLLIAGSATAFFIAL), and 272-292 (VSLIPFAIYRFLLAGGIYWGL).

It belongs to the UppP family.

The protein resides in the cell inner membrane. The catalysed reaction is di-trans,octa-cis-undecaprenyl diphosphate + H2O = di-trans,octa-cis-undecaprenyl phosphate + phosphate + H(+). In terms of biological role, catalyzes the dephosphorylation of undecaprenyl diphosphate (UPP). Confers resistance to bacitracin. The sequence is that of Undecaprenyl-diphosphatase from Blochmanniella pennsylvanica (strain BPEN).